The following is a 156-amino-acid chain: MASLSWWNPAPATAAMAACSPTPTSCKTSNSLALPRSVFVSKQEELMKQAKSLLVKTQQQSKKKKNNSTNSRRTTSIQCLSQEQKWTHEGSITESLPNGMFRVKLDNADVVLGYISGKIRKNFIRLLPGDRVKIEVSRYDSSKGRIIYRLRGGREG.

A chloroplast-targeting transit peptide spans M1–S81. Residues K51–C79 form a disordered region. A compositionally biased stretch (low complexity) spans N67 to S76. Residues Q82–R151 enclose the S1-like domain.

The protein belongs to the IF-1 family. As to quaternary structure, component of the 30S ribosomal translation pre-initiation complex which assembles on the 30S ribosome in the order IF-2 and IF-3, IF-1 and N-formylmethionyl-tRNA(fMet); mRNA recruitment can occur at any time during PIC assembly.

The protein localises to the plastid. It is found in the chloroplast. Functionally, one of the essential components for the initiation of protein synthesis. Stabilizes the binding of IF-2 and IF-3 on the 30S subunit to which N-formylmethionyl-tRNA(fMet) subsequently binds. Helps modulate mRNA selection, yielding the 30S pre-initiation complex (PIC). Upon addition of the 50S ribosomal subunit IF-1, IF-2 and IF-3 are released leaving the mature 70S translation initiation complex. This is Translation initiation factor IF-1, chloroplastic (infA) from Solanum lycopersicum (Tomato).